The primary structure comprises 424 residues: DNA primase DnaG (424 aa).

Positions 171–245 constitute a Toprim domain; that stretch reads DDIIVVEGRA…DVDFVARAPP (75 aa). The Mg(2+) site is built by E177, D219, and D221.

It belongs to the archaeal DnaG primase family. As to quaternary structure, forms a ternary complex with MCM helicase and DNA. It depends on Mg(2+) as a cofactor.

It carries out the reaction ssDNA + n NTP = ssDNA/pppN(pN)n-1 hybrid + (n-1) diphosphate.. Functionally, RNA polymerase that catalyzes the synthesis of short RNA molecules used as primers for DNA polymerase during DNA replication. The chain is DNA primase DnaG from Methanocaldococcus jannaschii (strain ATCC 43067 / DSM 2661 / JAL-1 / JCM 10045 / NBRC 100440) (Methanococcus jannaschii).